We begin with the raw amino-acid sequence, 644 residues long: MFQDNPLLAQLKQQLHSQTPRAEGVVKATEKGFGFLEVDAQKSYFIPPPQMKKVMHGDRIIAVIHSEKERESAEPEELVEPFLTRFVGKVQGKNDRLAIVPDHPLLKDAIPCRAARGLNHEFKEGDWAVAEMRRHPLKGDRSFYAELTQYITFGDDHFVPWWVTLARHNLEKEAPDGVATEMLDEGLVRKDLTALDFVTIDSASTEDMDDALFAKALPDDKLQLIVAIADPTAWIAEGSKLDKAAKIRAFTNYLPGFNIPMLPRELSDDLCSLRANEVRPVLACRMTLSADGTIEDNIEFFAATIESKAKLVYDQVSDWLENTGDWQPESEAIAEQVRLLAQICQRRGEWRHNHALVFKDRPDYRFILGEKGEVLDIVAEPRRIANRIVEEAMIAANICAARVLRDKLGFGIYNVHMGFDPANADALAALLKTHGLHVDAEEVLTLDGFCKLRRELDAQPTGFLDSRIRRFQSFAEISTEPGPHFGLGLEAYATWTSPIRKYGDMINHRLLKAVIKGETATRPQDEITVQMAERRRLNRMAERDVGDWLYARFLKDKAGTDTRFAAEIVDISRGGMRVRLVDNGAIAFIPAPFLHAVRDELVCSQENGTVQIKGETVYKVTDVIDVTIAEVRMETRSIIARPVA.

The 328-residue stretch at arginine 189–lysine 516 folds into the RNB domain. One can recognise an S1 motif domain in the interval aspartate 561–valine 643.

This sequence belongs to the RNR ribonuclease family. RNase II subfamily.

It localises to the cytoplasm. It carries out the reaction Exonucleolytic cleavage in the 3'- to 5'-direction to yield nucleoside 5'-phosphates.. Involved in mRNA degradation. Hydrolyzes single-stranded polyribonucleotides processively in the 3' to 5' direction. The protein is Exoribonuclease 2 of Escherichia coli O157:H7.